A 248-amino-acid polypeptide reads, in one-letter code: 4-hydroxy-tetrahydrodipicolinate reductase (248 aa).

NAD(+) contacts are provided by residues 9–14 (GAKGRV), 77–79 (GTT), and 104–107 (APNF). The active-site Proton donor/acceptor is the histidine 134. Histidine 135 is a (S)-2,3,4,5-tetrahydrodipicolinate binding site. Catalysis depends on lysine 138, which acts as the Proton donor. Residue 144 to 145 (GT) coordinates (S)-2,3,4,5-tetrahydrodipicolinate.

Belongs to the DapB family.

The protein localises to the cytoplasm. The enzyme catalyses (S)-2,3,4,5-tetrahydrodipicolinate + NAD(+) + H2O = (2S,4S)-4-hydroxy-2,3,4,5-tetrahydrodipicolinate + NADH + H(+). It carries out the reaction (S)-2,3,4,5-tetrahydrodipicolinate + NADP(+) + H2O = (2S,4S)-4-hydroxy-2,3,4,5-tetrahydrodipicolinate + NADPH + H(+). The protein operates within amino-acid biosynthesis; L-lysine biosynthesis via DAP pathway; (S)-tetrahydrodipicolinate from L-aspartate: step 4/4. Its function is as follows. Catalyzes the conversion of 4-hydroxy-tetrahydrodipicolinate (HTPA) to tetrahydrodipicolinate. The chain is 4-hydroxy-tetrahydrodipicolinate reductase from Corynebacterium efficiens (strain DSM 44549 / YS-314 / AJ 12310 / JCM 11189 / NBRC 100395).